A 222-amino-acid polypeptide reads, in one-letter code: MRIHDFDPDNRPRERLLRSGAASLSPAELLAIILRTGTKNLNIVDTCNELIARYSLEKLANITLEELKKVKGIGDAKAMQIVAIFELNKRLHYSRNLNKKIQAARDVFEYMAGRVPDETKEHLFVLHLNTKNQIIKTELVSVGTLNAALIHPREVFKSAIKESSHAIILVHNHPSGDVEPSNADKQVTDLLKQASTVIQIDLLDHIIIGKTGCFSFRESGLL.

Residues 100–222 (KIQAARDVFE…CFSFRESGLL (123 aa)) enclose the MPN domain. 3 residues coordinate Zn(2+): H171, H173, and D184. A JAMM motif motif is present at residues 171–184 (HNHPSGDVEPSNAD).

It belongs to the UPF0758 family.

In Pelodictyon phaeoclathratiforme (strain DSM 5477 / BU-1), this protein is UPF0758 protein Ppha_0935.